A 419-amino-acid chain; its full sequence is Effector protein BipC (419 aa).

Disordered stretches follow at residues 62-94 and 338-402; these read VAGS…GLER and LQSG…AKSQ. Basic and acidic residues-rich tracts occupy residues 71–94 and 380–392; these read ELAR…GLER and TRDE…REAA.

The protein belongs to the SctB/SipC family.

Its subcellular location is the secreted. The chain is Effector protein BipC (bipC) from Burkholderia pseudomallei (strain 1710b).